Consider the following 251-residue polypeptide: Adenylate kinase (251 aa).

46–51 lines the ATP pocket; it reads GAGKGT. An NMP region spans residues 66–95; that stretch reads ATGDMLRSQVQQQTPLGVEAKKIMDAGGLV. AMP is bound by residues T67, R72, 93 to 95, 122 to 125, and Q129; these read GLV and GFPR. Residues 163-200 are LID; sequence GRLVHPASGRSYHKVFNPPKKEMIDDITGEALVQRSDD. Residues R164 and 173–174 each bind ATP; that span reads SY. Residues R197 and R208 each coordinate AMP. Q236 provides a ligand contact to ATP.

Belongs to the adenylate kinase family. AK2 subfamily. As to quaternary structure, monomer.

The protein resides in the cytoplasm. The protein localises to the cytosol. It is found in the mitochondrion intermembrane space. The catalysed reaction is AMP + ATP = 2 ADP. Its function is as follows. Catalyzes the reversible transfer of the terminal phosphate group between ATP and AMP. Plays an important role in cellular energy homeostasis and in adenine nucleotide metabolism. Adenylate kinase activity is critical for regulation of the phosphate utilization and the AMP de novo biosynthesis pathways. The sequence is that of Adenylate kinase from Yarrowia lipolytica (strain CLIB 122 / E 150) (Yeast).